Here is a 160-residue protein sequence, read N- to C-terminus: General odorant-binding protein 2 (160 aa).

Positions 1 to 20 are cleaved as a signal peptide; that stretch reads MFSFLILVFVASVADSVIGT. Intrachain disulfides connect Cys-38-Cys-73, Cys-69-Cys-127, and Cys-116-Cys-136.

Belongs to the PBP/GOBP family. In terms of assembly, homodimer. In terms of tissue distribution, detected in antenna (at protein level). Expressed at high levels in antenna.

Functionally, present in the aqueous fluid surrounding olfactory sensory dendrites and are thought to aid in the capture and transport of hydrophobic odorants into and through this fluid. The polypeptide is General odorant-binding protein 2 (Bombyx mori (Silk moth)).